A 104-amino-acid polypeptide reads, in one-letter code: U20-lycotoxin-Ls1c (104 aa).

Residues methionine 1–alanine 30 form the signal peptide. The region spanning glycine 31–serine 76 is the WAP domain. Intrachain disulfides connect cysteine 34/cysteine 64, cysteine 42/cysteine 68, cysteine 51/cysteine 63, cysteine 52/cysteine 90, and cysteine 57/cysteine 72.

This sequence belongs to the venom protein 11 family. 02 (wap-2) subfamily. Post-translationally, contains 5 disulfide bonds. In terms of tissue distribution, expressed by the venom gland.

The protein localises to the secreted. Its function is as follows. Has antibacterial activity. This is U20-lycotoxin-Ls1c from Lycosa singoriensis (Wolf spider).